The following is a 206-amino-acid chain: Ras-related protein Rab-7b (206 aa).

Residue 15-22 (GDSGVGKT) participates in GTP binding. S17 and S23 each carry phosphoserine. 3 positions are modified to phosphothreonine: T34, T40, and T64. GTP-binding positions include 34-40 (TQQYRAT) and 63-67 (DTAGQ). Positions 37 to 45 (YRATVGADF) match the Effector region motif. S72 carries the post-translational modification Phosphoserine. 2 positions are modified to phosphotyrosine: Y78 and Y88. Residues 125–128 (NKLD) and 157–158 (AK) contribute to the GTP site. 2 S-geranylgeranyl cysteine lipidation sites follow: C205 and C206.

The protein belongs to the small GTPase superfamily. Rab family. In terms of processing, glycosylated.

It is found in the cytoplasm. The protein localises to the cytoskeleton. The protein is Ras-related protein Rab-7b of Paramecium octaurelia.